A 39-amino-acid polypeptide reads, in one-letter code: Photosystem II reaction center protein Y (39 aa).

A helical transmembrane segment spans residues 7-25 (LLIVLLPILAAAGWAVFNI).

It belongs to the PsbY family. PSII is composed of 1 copy each of membrane proteins PsbA, PsbB, PsbC, PsbD, PsbE, PsbF, PsbH, PsbI, PsbJ, PsbK, PsbL, PsbM, PsbT, PsbX, PsbY, PsbZ, Psb30/Ycf12, peripheral proteins PsbO, CyanoQ (PsbQ), PsbU, PsbV and a large number of cofactors. It forms dimeric complexes.

It localises to the cellular thylakoid membrane. Loosely associated component of the core of photosystem II (PSII), it is not always seen in crystals. PSII is a light-driven water plastoquinone oxidoreductase, using light energy to abstract electrons from H(2)O, generating a proton gradient subsequently used for ATP formation. This chain is Photosystem II reaction center protein Y, found in Trichodesmium erythraeum (strain IMS101).